Here is a 624-residue protein sequence, read N- to C-terminus: Translocator protein BipB (624 aa).

A disordered region spans residues 54–99; that stretch reads LASEQCDAQPVTDDARLDRLDDKPALRAPRSDAAHAADGNARGNGG. Over residues 66-88 the composition is skewed to basic and acidic residues; sequence DDARLDRLDDKPALRAPRSDAAH. The stretch at 313–343 forms a coiled coil; sequence EMQAKREAELQKKSDEYQEQVKKAEEMQKTM. Transmembrane regions (helical) follow at residues 359 to 379, 405 to 425, and 434 to 454; these read FAAA…GLAL, AILK…LVAC, and LAGA…AAFV.

The protein belongs to the SctE/SipB/YopB family.

The protein resides in the secreted. Its subcellular location is the host membrane. Its function is as follows. Plays a role in the bacterium-induced formation of multinucleated giant cell (MNGC), which is formed after host cell fusion, as well as in the intercellular spreading of bacteria and in the induction of apoptosis in macrophages. May act in concert with other effector proteins to induce fusion of host cell membranes. In Burkholderia thailandensis (strain ATCC 700388 / DSM 13276 / CCUG 48851 / CIP 106301 / E264), this protein is Translocator protein BipB (bipB).